We begin with the raw amino-acid sequence, 285 residues long: Cytochrome c1 (285 aa).

The signal sequence occupies residues 1–22; the sequence is MIRKLTLTAATALALSGGAAMA. 4 residues coordinate heme c: C58, C61, H62, and M207. The chain crosses the membrane as a helical span at residues 251–269; it reads AGFTAVMFLTVLSVLLYLT.

In terms of assembly, the main subunits of complex b-c1 are: cytochrome b, cytochrome c1 and the Rieske protein. Post-translationally, binds 1 heme c group covalently per subunit.

Its subcellular location is the cell membrane. Component of the ubiquinol-cytochrome c reductase complex (complex III or cytochrome b-c1 complex), which is a respiratory chain that generates an electrochemical potential coupled to ATP synthesis. c1 functions as an electron donor to cytochrome c. The protein is Cytochrome c1 (petC) of Cereibacter sphaeroides (Rhodobacter sphaeroides).